Here is a 350-residue protein sequence, read N- to C-terminus: Ion-translocating oxidoreductase complex subunit D (350 aa).

5 helical membrane-spanning segments follow: residues 15–35, 36–56, 67–87, 88–108, and 122–142; these read QTQTLMLLVILACLPGLLAQT, WFFGWGSFIQILLALVTALGA, PIKPALMDGSAALTAVLIGLS, LPPLLPWWMLVLGTAFAIIIA, and PAMVAYVLLLVSFPVQMTSWL. Thr186 bears the FMN phosphoryl threonine mark. Transmembrane regions (helical) follow at residues 213–233, 242–262, 264–284, and 299–316; these read WGGIGWSWVNLGYLLGGLFLL, IPGAILGSLLLAATLGYLMTP, ATATPMFHLFSGATMLGAFFI, and LVYGVLIGVLVYLIRRFG.

Belongs to the NqrB/RnfD family. The complex is composed of six subunits: RnfA, RnfB, RnfC, RnfD, RnfE and RnfG. FMN serves as cofactor.

It is found in the cell inner membrane. Its function is as follows. Part of a membrane-bound complex that couples electron transfer with translocation of ions across the membrane. This chain is Ion-translocating oxidoreductase complex subunit D, found in Aeromonas salmonicida (strain A449).